Consider the following 393-residue polypeptide: Formate-dependent phosphoribosylglycinamide formyltransferase (393 aa).

N(1)-(5-phospho-beta-D-ribosyl)glycinamide-binding positions include 22 to 23 (EL) and glutamate 82. ATP-binding positions include arginine 114, lysine 155, 160–165 (SSGHGQ), 195–198 (EGFV), and glutamate 203. Residues 119–308 (RLAAEELGLP…EFALHARAIL (190 aa)) form the ATP-grasp domain. Mg(2+) is bound by residues glutamate 267 and glutamate 279. N(1)-(5-phospho-beta-D-ribosyl)glycinamide is bound by residues aspartate 286, lysine 356, and 363-364 (RR).

This sequence belongs to the PurK/PurT family. In terms of assembly, homodimer.

It carries out the reaction N(1)-(5-phospho-beta-D-ribosyl)glycinamide + formate + ATP = N(2)-formyl-N(1)-(5-phospho-beta-D-ribosyl)glycinamide + ADP + phosphate + H(+). It participates in purine metabolism; IMP biosynthesis via de novo pathway; N(2)-formyl-N(1)-(5-phospho-D-ribosyl)glycinamide from N(1)-(5-phospho-D-ribosyl)glycinamide (formate route): step 1/1. Functionally, involved in the de novo purine biosynthesis. Catalyzes the transfer of formate to 5-phospho-ribosyl-glycinamide (GAR), producing 5-phospho-ribosyl-N-formylglycinamide (FGAR). Formate is provided by PurU via hydrolysis of 10-formyl-tetrahydrofolate. The polypeptide is Formate-dependent phosphoribosylglycinamide formyltransferase (Pasteurella multocida (strain Pm70)).